The sequence spans 77 residues: Small ribosomal subunit protein uS17 (77 aa).

Belongs to the universal ribosomal protein uS17 family. In terms of assembly, part of the 30S ribosomal subunit.

Functionally, one of the primary rRNA binding proteins, it binds specifically to the 5'-end of 16S ribosomal RNA. This is Small ribosomal subunit protein uS17 from Rickettsia akari (strain Hartford).